Consider the following 252-residue polypeptide: 2-succinyl-6-hydroxy-2,4-cyclohexadiene-1-carboxylate synthase (252 aa).

It belongs to the AB hydrolase superfamily. MenH family. In terms of assembly, monomer.

The enzyme catalyses 5-enolpyruvoyl-6-hydroxy-2-succinyl-cyclohex-3-ene-1-carboxylate = (1R,6R)-6-hydroxy-2-succinyl-cyclohexa-2,4-diene-1-carboxylate + pyruvate. Its pathway is quinol/quinone metabolism; 1,4-dihydroxy-2-naphthoate biosynthesis; 1,4-dihydroxy-2-naphthoate from chorismate: step 3/7. It participates in quinol/quinone metabolism; menaquinone biosynthesis. Catalyzes a proton abstraction reaction that results in 2,5-elimination of pyruvate from 2-succinyl-5-enolpyruvyl-6-hydroxy-3-cyclohexene-1-carboxylate (SEPHCHC) and the formation of 2-succinyl-6-hydroxy-2,4-cyclohexadiene-1-carboxylate (SHCHC). In Salmonella paratyphi B (strain ATCC BAA-1250 / SPB7), this protein is 2-succinyl-6-hydroxy-2,4-cyclohexadiene-1-carboxylate synthase.